We begin with the raw amino-acid sequence, 1192 residues long: Reticulon-4 (1192 aa).

Residue methionine 1 is modified to N-acetylmethionine. A disordered region spans residues methionine 1–alanine 204. The Cytoplasmic portion of the chain corresponds to methionine 1–glycine 1018. Residues serine 7 and serine 15 each carry the phosphoserine modification. Over residues proline 31 to glutamate 53 the composition is skewed to acidic residues. The segment covering alanine 65–proline 77 has biased composition (low complexity). Residues proline 87–alanine 101 are compositionally biased toward pro residues. At serine 107 the chain carries Phosphoserine. The span at proline 110–lysine 132 shows a compositional bias: low complexity. Positions alanine 141 to serine 150 are enriched in pro residues. A Phosphoserine modification is found at serine 152. The span at tryptophan 159 to proline 173 shows a compositional bias: pro residues. Phosphoserine is present on residues serine 181, serine 182, serine 184, serine 361, and serine 446. Residues aspartate 427–serine 458 are disordered. The residue at position 450 (threonine 450) is a Phosphothreonine. A Phosphoserine modification is found at serine 511. The segment covering alanine 722–leucine 734 has biased composition (basic and acidic residues). The disordered stretch occupies residues alanine 722–glutamate 762. A compositionally biased stretch (acidic residues) spans valine 735–isoleucine 753. Serine 749 is modified (phosphoserine). Threonine 858 is modified (phosphothreonine). Phosphoserine is present on residues serine 881 and serine 991. In terms of domain architecture, Reticulon spans valine 1005–glutamate 1192. A helical membrane pass occupies residues valine 1019–valine 1039. At threonine 1040–alanine 1133 the chain is on the lumenal side. Lysine 1104 carries the N6-acetyllysine modification. Residues leucine 1134–isoleucine 1154 traverse the membrane as a helical segment. Over tyrosine 1155 to glutamate 1192 the chain is Cytoplasmic.

As to quaternary structure, binds to RTN4R. Interacts with ATL1. Interacts with TMEM170A. Interacts with RTN4IP1. In terms of assembly, interacts in trans with CNTNAP1. Interacts with REEP5. Interacts with synaptic plasticity regulator PANTS; the interaction results in enhanced RTN4-mediated inhibition of AMPA receptor clustering. Interacts with GPR50. Homodimer. Interacts with BAD/Bcl-xl and BCL2. Interact with RTN3. Interacts with NGBR. Interacts with SPTLC1. Interacts with GRAMD4. Interacts with CDH5. Interacts with BACE1 and BACE2. Interacts with REEP5. Interacts with RETREG3. As to quaternary structure, interacts with BACE1 and BACE2. Interacts with TMEM33. As to expression, isoform A: is specifically expressed in brain and testis and weakly in heart and skeletal muscle. Isoform B: widely expressed except for the liver. Highly expressed in endothelial cells and vascular smooth muscle cells, including blood vessels and mesenteric arteries. Isoform C: is expressed in brain, skeletal muscle and adipocytes. Isoform D is testis-specific.

Its subcellular location is the endoplasmic reticulum membrane. The protein localises to the cell membrane. The protein resides in the synapse. It localises to the cell junction. Functionally, required to induce the formation and stabilization of endoplasmic reticulum (ER) tubules. They regulate membrane morphogenesis in the ER by promoting tubular ER production. They influence nuclear envelope expansion, nuclear pore complex formation and proper localization of inner nuclear membrane proteins. However each isoform have specific functions mainly depending on their tissue expression specificities. Its function is as follows. Developmental neurite growth regulatory factor with a role as a negative regulator of axon-axon adhesion and growth, and as a facilitator of neurite branching. Regulates neurite fasciculation, branching and extension in the developing nervous system. Involved in down-regulation of growth, stabilization of wiring and restriction of plasticity in the adult CNS. Regulates the radial migration of cortical neurons via an RTN4R-LINGO1 containing receptor complex. Acts as a negative regulator of central nervous system angiogenesis. Inhibits spreading, migration and sprouting of primary brain microvascular endothelial cells (MVECs). Also induces the retraction of MVECs lamellipodia and filopodia in a ROCK pathway-dependent manner. Mainly function in endothelial cells and vascular smooth muscle cells, is also involved in immune system regulation. Modulator of vascular remodeling, promotes the migration of endothelial cells but inhibits the migration of vascular smooth muscle cells. Regulates endothelial sphingolipid biosynthesis with direct effects on vascular function and blood pressure. Inhibits serine palmitoyltransferase, SPTLC1, the rate-limiting enzyme of the novo sphingolipid biosynthetic pathway, thereby controlling production of endothelial sphingosine-1-phosphate (S1P). Required to promote macrophage homing and functions such as cytokine/chemokine gene expression involved in angiogenesis, arteriogenesis and tissue repair. Mediates ICAM1 induced transendothelial migration of leukocytes such as monocytes and neutrophils and acute inflammation. Necessary for immune responses triggered by nucleic acid sensing TLRs, such as TLR9, is required for proper TLR9 location to endolysosomes. Also involved in immune response to LPS. Plays a role in liver regeneration through the modulation of hepatocytes proliferation. Reduces the anti-apoptotic activity of Bcl-xl and Bcl-2. This is likely consecutive to their change in subcellular location, from the mitochondria to the endoplasmic reticulum, after binding and sequestration. With isoform C, inhibits BACE1 activity and amyloid precursor protein processing. In terms of biological role, regulates cardiomyocyte apoptosis upon hypoxic conditions. With isoform B, inhibits BACE1 activity and amyloid precursor protein processing. The protein is Reticulon-4 of Homo sapiens (Human).